A 129-amino-acid polypeptide reads, in one-letter code: Small ribosomal subunit protein uS11 (129 aa).

This sequence belongs to the universal ribosomal protein uS11 family. In terms of assembly, part of the 30S ribosomal subunit. Interacts with proteins S7 and S18. Binds to IF-3.

Its function is as follows. Located on the platform of the 30S subunit, it bridges several disparate RNA helices of the 16S rRNA. Forms part of the Shine-Dalgarno cleft in the 70S ribosome. This chain is Small ribosomal subunit protein uS11, found in Azorhizobium caulinodans (strain ATCC 43989 / DSM 5975 / JCM 20966 / LMG 6465 / NBRC 14845 / NCIMB 13405 / ORS 571).